Reading from the N-terminus, the 439-residue chain is Ribosomal protein uS12 methylthiotransferase RimO (439 aa).

In terms of domain architecture, MTTase N-terminal spans 5–115 (PKIGFVSLGC…LIEAVHTHAP (111 aa)). C14, C50, C79, C146, C150, and C153 together coordinate [4Fe-4S] cluster. Residues 132 to 369 (LTPRHYSYLK…MGLQAQISTD (238 aa)) enclose the Radical SAM core domain. The region spanning 372 to 439 (QRFVGTEQQV…ESTEYDLIAD (68 aa)) is the TRAM domain.

It belongs to the methylthiotransferase family. RimO subfamily. [4Fe-4S] cluster serves as cofactor.

The protein localises to the cytoplasm. The enzyme catalyses L-aspartate(89)-[ribosomal protein uS12]-hydrogen + (sulfur carrier)-SH + AH2 + 2 S-adenosyl-L-methionine = 3-methylsulfanyl-L-aspartate(89)-[ribosomal protein uS12]-hydrogen + (sulfur carrier)-H + 5'-deoxyadenosine + L-methionine + A + S-adenosyl-L-homocysteine + 2 H(+). Functionally, catalyzes the methylthiolation of an aspartic acid residue of ribosomal protein uS12. The sequence is that of Ribosomal protein uS12 methylthiotransferase RimO from Francisella tularensis subsp. novicida (strain U112).